The chain runs to 276 residues: Pantothenate synthetase (276 aa).

27–34 (MGALHKGH) provides a ligand contact to ATP. The active-site Proton donor is the His-34. Position 58 (Gln-58) interacts with (R)-pantoate. Gln-58 provides a ligand contact to beta-alanine. Position 147 to 150 (147 to 150 (GKKD)) interacts with ATP. Gln-153 contacts (R)-pantoate. ATP-binding positions include Val-176 and 184-187 (LSSR).

The protein belongs to the pantothenate synthetase family. Homodimer.

The protein resides in the cytoplasm. It carries out the reaction (R)-pantoate + beta-alanine + ATP = (R)-pantothenate + AMP + diphosphate + H(+). The protein operates within cofactor biosynthesis; (R)-pantothenate biosynthesis; (R)-pantothenate from (R)-pantoate and beta-alanine: step 1/1. Functionally, catalyzes the condensation of pantoate with beta-alanine in an ATP-dependent reaction via a pantoyl-adenylate intermediate. The chain is Pantothenate synthetase from Helicobacter pylori (strain Shi470).